The sequence spans 891 residues: DNA mismatch repair protein MutS (891 aa).

Position 634–641 (634–641 (GPNMGGKS)) interacts with ATP.

The protein belongs to the DNA mismatch repair MutS family.

Functionally, this protein is involved in the repair of mismatches in DNA. It is possible that it carries out the mismatch recognition step. This protein has a weak ATPase activity. In Burkholderia pseudomallei (strain 668), this protein is DNA mismatch repair protein MutS.